Reading from the N-terminus, the 67-residue chain is MKAKELHDLSTEELQKKLIDFKDELFRLRFQLATQQLENPMRIRDVRKNIARTQTVLRQRELEAQKA.

The protein belongs to the universal ribosomal protein uL29 family.

The protein is Large ribosomal subunit protein uL29 of Heliobacterium modesticaldum (strain ATCC 51547 / Ice1).